The primary structure comprises 400 residues: S-adenosylmethionine synthase (400 aa).

ATP is bound at residue 137 to 142 (GEGSGD).

The protein belongs to the AdoMet synthase 2 family. Mg(2+) serves as cofactor.

The enzyme catalyses L-methionine + ATP + H2O = S-adenosyl-L-methionine + phosphate + diphosphate. Its pathway is amino-acid biosynthesis; S-adenosyl-L-methionine biosynthesis; S-adenosyl-L-methionine from L-methionine: step 1/1. Catalyzes the formation of S-adenosylmethionine from methionine and ATP. The protein is S-adenosylmethionine synthase of Haloarcula marismortui (strain ATCC 43049 / DSM 3752 / JCM 8966 / VKM B-1809) (Halobacterium marismortui).